We begin with the raw amino-acid sequence, 397 residues long: MAKAKFERTKPHVNIGTIGHVDHGKTTLTAAITKVLHDAIPDLNPFTPFDEIDKAPEERQRGITISIAHVEYQTESRHYAHVDCPGHADYIKNMITGAAQMDGAILVVAATDGPMPQTKEHVLLARQSGVPYIVVALNKADMVDDEEIMELVELEVRELLSEYEFDGDNCPVVQVSALKALEGDKEWGEKLLGLMKAVDENIPQPERDVDKPFLMPIEDVFTITGRGTVVTGRIERGVLKVNETVDIIGIKTEKTTTTVTGIEMFRKLLDEGQAGENVGLLLRGIKREDVERGQCIIKPGTVTPHTEFEATAYILSKDEGGRHTPFFNNYRPQFYFRTTDVTGVVTLKEGTEMVMPGDNAEMTVNLIQPVAMEEGLRFTIREGGRTVGAGQVVKINK.

The tr-type G domain maps to lysine 10 to glutamate 206. A G1 region spans residues glycine 19–threonine 26. Glycine 19–threonine 26 is a binding site for GTP. Threonine 26 provides a ligand contact to Mg(2+). Residues glycine 62–serine 66 form a G2 region. Residues aspartate 83–glycine 86 form a G3 region. Residues aspartate 83–histidine 87 and asparagine 138–aspartate 141 each bind GTP. The segment at asparagine 138–aspartate 141 is G4. The interval serine 176–leucine 178 is G5.

It belongs to the TRAFAC class translation factor GTPase superfamily. Classic translation factor GTPase family. EF-Tu/EF-1A subfamily. Monomer.

It is found in the cytoplasm. It carries out the reaction GTP + H2O = GDP + phosphate + H(+). Functionally, GTP hydrolase that promotes the GTP-dependent binding of aminoacyl-tRNA to the A-site of ribosomes during protein biosynthesis. This is Elongation factor Tu from Streptomyces cinnamoneus (Streptoverticillium cinnamoneum).